The following is a 670-amino-acid chain: Probable leucine-rich repeat receptor-like protein kinase At1g68400 (670 aa).

The N-terminal stretch at 1 to 29 is a signal peptide; sequence MAKSSFFNKHLLLSLLILLQSCLLSSSSS. Residues 30–274 are Extracellular-facing; the sequence is TDSETLLNFK…KSNNTSRIST (245 aa). Residues Asn52, Asn79, Asn102, Asn109, and Asn112 are each glycosylated (N-linked (GlcNAc...) asparagine). 6 LRR repeats span residues 69-91, 92-114, 115-137, 139-162, 163-185, and 186-207; these read RVTR…TSLT, SLRV…SNLT, ALKL…ITSL, RLYR…TDLT, HLLT…NLSD, and LQDF…LSQF. Residues Asn149, Asn182, and Asn190 are each glycosylated (N-linked (GlcNAc...) asparagine). Residues 230–266 form a disordered region; sequence SSDPTKPGRPDEAKASPLNKPETVPSSPTSIHGGDKS. Positions 253–266 are enriched in polar residues; sequence VPSSPTSIHGGDKS. Asn268 carries an N-linked (GlcNAc...) asparagine glycan. The helical transmembrane segment at 275–295 threads the bilayer; sequence ISLIAIILGDFIILSFVSLLL. Residues 296–670 lie on the Cytoplasmic side of the membrane; it reads YYCFWRQYAV…EDTCGGTTSQ (375 aa). Residues 362–636 enclose the Protein kinase domain; sequence RASAEMLGKG…GHVVKLIEDI (275 aa). Ser364 is subject to Phosphoserine. ATP-binding positions include 368–376 and Lys390; that span reads LGKGGFGTA. Ser443 carries the phosphoserine modification. Thr463 is subject to Phosphothreonine. The Proton acceptor role is filled by Asp491. Thr616 carries the phosphothreonine modification.

Belongs to the protein kinase superfamily. Ser/Thr protein kinase family.

Its subcellular location is the cell membrane. It carries out the reaction L-seryl-[protein] + ATP = O-phospho-L-seryl-[protein] + ADP + H(+). It catalyses the reaction L-threonyl-[protein] + ATP = O-phospho-L-threonyl-[protein] + ADP + H(+). This chain is Probable leucine-rich repeat receptor-like protein kinase At1g68400, found in Arabidopsis thaliana (Mouse-ear cress).